A 343-amino-acid chain; its full sequence is tRNA-specific 2-thiouridylase MnmA 2 (343 aa).

Residues 7 to 14 (GMSGGVDS) and leucine 33 each bind ATP. Cysteine 91 (nucleophile) is an active-site residue. A disulfide bridge connects residues cysteine 91 and cysteine 189. Glycine 115 provides a ligand contact to ATP. The interaction with tRNA stretch occupies residues 139–141 (KDQ). The active-site Cysteine persulfide intermediate is the cysteine 189.

The protein belongs to the MnmA/TRMU family.

It localises to the cytoplasm. It carries out the reaction S-sulfanyl-L-cysteinyl-[protein] + uridine(34) in tRNA + AH2 + ATP = 2-thiouridine(34) in tRNA + L-cysteinyl-[protein] + A + AMP + diphosphate + H(+). Its function is as follows. Catalyzes the 2-thiolation of uridine at the wobble position (U34) of tRNA, leading to the formation of s(2)U34. The sequence is that of tRNA-specific 2-thiouridylase MnmA 2 from Fusobacterium nucleatum subsp. nucleatum (strain ATCC 25586 / DSM 15643 / BCRC 10681 / CIP 101130 / JCM 8532 / KCTC 2640 / LMG 13131 / VPI 4355).